Reading from the N-terminus, the 201-residue chain is FMN-dependent NADH:quinone oxidoreductase (201 aa).

FMN is bound by residues serine 10, 16–18 (SQS), 96–99 (MYNF), and 140–143 (SRGG).

This sequence belongs to the azoreductase type 1 family. As to quaternary structure, homodimer. Requires FMN as cofactor.

The enzyme catalyses 2 a quinone + NADH + H(+) = 2 a 1,4-benzosemiquinone + NAD(+). It catalyses the reaction N,N-dimethyl-1,4-phenylenediamine + anthranilate + 2 NAD(+) = 2-(4-dimethylaminophenyl)diazenylbenzoate + 2 NADH + 2 H(+). Its function is as follows. Quinone reductase that provides resistance to thiol-specific stress caused by electrophilic quinones. Also exhibits azoreductase activity. Catalyzes the reductive cleavage of the azo bond in aromatic azo compounds to the corresponding amines. In Escherichia coli O6:K15:H31 (strain 536 / UPEC), this protein is FMN-dependent NADH:quinone oxidoreductase.